The primary structure comprises 303 residues: Propanal dehydrogenase (CoA-propanoylating) (303 aa).

Residue 12–15 coordinates NAD(+); that stretch reads SGNI. Cysteine 127 functions as the Acyl-thioester intermediate in the catalytic mechanism. Residues 158 to 166 and asparagine 277 contribute to the NAD(+) site; that span reads SAGPGTRAN.

It belongs to the acetaldehyde dehydrogenase family. As to quaternary structure, monomer. Forms a heterotetramer composed of two aldolase (HsaF) and two dehydrogenase (HsaG) subunits.

It carries out the reaction propanal + NAD(+) + CoA = propanoyl-CoA + NADH + H(+). It catalyses the reaction acetaldehyde + NAD(+) + CoA = acetyl-CoA + NADH + H(+). Involved in cholesterol degradation. Catalyzes the conversion of propanal to propanoyl-CoA, using NAD(+) and coenzyme A. This is Propanal dehydrogenase (CoA-propanoylating) from Mycobacterium bovis (strain ATCC BAA-935 / AF2122/97).